Reading from the N-terminus, the 38-residue chain is Large ribosomal subunit protein bL36 (38 aa).

Belongs to the bacterial ribosomal protein bL36 family.

The protein is Large ribosomal subunit protein bL36 of Flavobacterium johnsoniae (strain ATCC 17061 / DSM 2064 / JCM 8514 / BCRC 14874 / CCUG 350202 / NBRC 14942 / NCIMB 11054 / UW101) (Cytophaga johnsonae).